The following is a 92-amino-acid chain: Small ribosomal subunit protein uS15 (92 aa).

The protein belongs to the universal ribosomal protein uS15 family. As to quaternary structure, part of the 30S ribosomal subunit. Forms a bridge to the 50S subunit in the 70S ribosome, contacting the 23S rRNA.

In terms of biological role, one of the primary rRNA binding proteins, it binds directly to 16S rRNA where it helps nucleate assembly of the platform of the 30S subunit by binding and bridging several RNA helices of the 16S rRNA. Its function is as follows. Forms an intersubunit bridge (bridge B4) with the 23S rRNA of the 50S subunit in the ribosome. This chain is Small ribosomal subunit protein uS15, found in Symbiobacterium thermophilum (strain DSM 24528 / JCM 14929 / IAM 14863 / T).